The chain runs to 467 residues: UDP-N-acetylmuramoylalanine--D-glutamate ligase (467 aa).

121–127 provides a ligand contact to ATP; it reads GTNGKST.

This sequence belongs to the MurCDEF family.

It is found in the cytoplasm. It carries out the reaction UDP-N-acetyl-alpha-D-muramoyl-L-alanine + D-glutamate + ATP = UDP-N-acetyl-alpha-D-muramoyl-L-alanyl-D-glutamate + ADP + phosphate + H(+). It functions in the pathway cell wall biogenesis; peptidoglycan biosynthesis. Functionally, cell wall formation. Catalyzes the addition of glutamate to the nucleotide precursor UDP-N-acetylmuramoyl-L-alanine (UMA). The polypeptide is UDP-N-acetylmuramoylalanine--D-glutamate ligase (Brucella abortus (strain 2308)).